The following is a 28-amino-acid chain: GLLDVVKGAAKNLLASALDKLKCKVTGC.

Cys23 and Cys28 are disulfide-bonded.

As to expression, expressed by the skin glands.

The protein localises to the secreted. Its function is as follows. Has antibacterial activity against the Gram positive bacterium L.lactis. This chain is Ranatuerin-2AVa, found in Rana arvalis (Moor frog).